The primary structure comprises 770 residues: MDVNEEAMAAHKRAFLDFLDQDVGKGVYMQAVRDMVQNKRHRLIIGMDDLRNHSLDLARRVIRSPAEYMQPASDAVTEVARNLDPKFLKEGQRVLVGFSGPFGFHRVTPRDLMSSFIGTMVCVEGIVTKCSLVRPKVVKSVHYCPATGGTLSREYRDITSFVGLPTGSVYPTRDENGNLLVTEYGMCEYKDHQTLSMQEVPENSAPGQLPRTVDIIVEDDLVDSCKPGDRVSIVGVYKALPGKSKGSVSGVFRTVLIANNVSLMNKEANAPVYTREDLKRMKEISRRNDTFDLLGNSLAPSIYGHLWIKKAVVLLMLGGVEKNLKNGTHLRGDINMMMVGDPSVAKSQLLRAVMNIAPLAISTTGRGSSGVGLTAAVTSDQETGERRLEAGAMVLADRGVVCIDEFDKMNDQDRVAIHEVMEQQTVTIAKAGIHASLNARCSVIAAANPIYGTYDRSLTPTKNIGLPDSLLSRFDLLFIVLDQMDPEIDRQISEHVARMHRYCTDDGGARSLDKTGYAEEDDGDVNAAIFVKYDRMLHGQDRRRGKKSKQDRLTVKFLKKYIHYAKNLIQPRLTDEASDHIATSYAELRDGGANAKSGGGTLPITARTLETIIRLSTAHAKMKLRHEVLKTDVEAALQVLNFAIYHKELTEMEEREQREMEMKQQADHDAGASGGNADEHRSSGNDPMDVDVGNASNDQDVPAERIEAFEAILGQHVLANHLDQISIDEIEQTVNREAAAPYNRRQVEFILERMQDANRIMIRDGIVRII.

Positions 290-496 constitute an MCM domain; it reads TFDLLGNSLA…EIDRQISEHV (207 aa). ATP is bound at residue 340 to 347; that stretch reads GDPSVAKS. The short motif at 472-475 is the Arginine finger element; it reads SRFD. The segment covering 653 to 670 has biased composition (basic and acidic residues); the sequence is EEREQREMEMKQQADHDA. Residues 653 to 698 are disordered; that stretch reads EEREQREMEMKQQADHDAGASGGNADEHRSSGNDPMDVDVGNASND.

Belongs to the MCM family. In terms of assembly, component of the minichromosome maintenance (MCM) complex, a heterotetramer composed of MCM2, MCM3, MCM4, MCM5, MCM6 and MCM7.

It is found in the nucleus. It catalyses the reaction ATP + H2O = ADP + phosphate + H(+). Probable component of the MCM2-7 complex (MCM complex) that may function as a DNA helicase and which is essential to undergo a single round of replication initiation and elongation per cell cycle in eukaryotic cells. The sequence is that of DNA replication licensing factor MCM3 (MCM3) from Oryza sativa subsp. indica (Rice).